Here is a 317-residue protein sequence, read N- to C-terminus: Acetyl-coenzyme A carboxylase carboxyl transferase subunit alpha (317 aa).

Residues 33–294 enclose the CoA carboxyltransferase C-terminal domain; it reads NLDDEIARLQ…KQRLLEDLAD (262 aa).

The protein belongs to the AccA family. In terms of assembly, acetyl-CoA carboxylase is a heterohexamer composed of biotin carboxyl carrier protein (AccB), biotin carboxylase (AccC) and two subunits each of ACCase subunit alpha (AccA) and ACCase subunit beta (AccD).

The protein resides in the cytoplasm. The enzyme catalyses N(6)-carboxybiotinyl-L-lysyl-[protein] + acetyl-CoA = N(6)-biotinyl-L-lysyl-[protein] + malonyl-CoA. Its pathway is lipid metabolism; malonyl-CoA biosynthesis; malonyl-CoA from acetyl-CoA: step 1/1. Its function is as follows. Component of the acetyl coenzyme A carboxylase (ACC) complex. First, biotin carboxylase catalyzes the carboxylation of biotin on its carrier protein (BCCP) and then the CO(2) group is transferred by the carboxyltransferase to acetyl-CoA to form malonyl-CoA. In Glaesserella parasuis serovar 5 (strain SH0165) (Haemophilus parasuis), this protein is Acetyl-coenzyme A carboxylase carboxyl transferase subunit alpha.